The primary structure comprises 430 residues: Agropine synthesis reductase (430 aa).

203-227 (LVSGSNRGVGKAIAEDLIAHGYRLS) contacts NAD(+). Residue S333 participates in substrate binding. The Proton acceptor role is filled by Y346.

The protein belongs to the short-chain dehydrogenases/reductases (SDR) family.

It participates in opine metabolism; mannopine biosynthesis. Its function is as follows. Reduces deoxy-fructosyl-glutamine to mannopine. This is Agropine synthesis reductase (mas1) from Rhizobium rhizogenes (Agrobacterium rhizogenes).